The sequence spans 401 residues: Enolase (401 aa).

Gln-154 provides a ligand contact to (2R)-2-phosphoglycerate. Glu-197 acts as the Proton donor in catalysis. Mg(2+) contacts are provided by Asp-233, Glu-274, and Asp-301. (2R)-2-phosphoglycerate is bound by residues Lys-326, Arg-355, Ser-356, and Lys-377. Lys-326 functions as the Proton acceptor in the catalytic mechanism.

Belongs to the enolase family. Mg(2+) is required as a cofactor.

The protein localises to the cytoplasm. It localises to the secreted. It is found in the cell surface. The enzyme catalyses (2R)-2-phosphoglycerate = phosphoenolpyruvate + H2O. Its pathway is carbohydrate degradation; glycolysis; pyruvate from D-glyceraldehyde 3-phosphate: step 4/5. Catalyzes the reversible conversion of 2-phosphoglycerate (2-PG) into phosphoenolpyruvate (PEP). It is essential for the degradation of carbohydrates via glycolysis. The chain is Enolase from Thermoplasma acidophilum (strain ATCC 25905 / DSM 1728 / JCM 9062 / NBRC 15155 / AMRC-C165).